The primary structure comprises 407 residues: Probable tRNA sulfurtransferase (407 aa).

The 105-residue stretch at 61 to 165 folds into the THUMP domain; the sequence is EEMCNRLKKV…LDAIYMYDQV (105 aa). ATP is bound by residues 183–184, 208–209, R265, G287, and Q296; these read ML and HF.

It belongs to the ThiI family.

It is found in the cytoplasm. The enzyme catalyses [ThiI sulfur-carrier protein]-S-sulfanyl-L-cysteine + a uridine in tRNA + 2 reduced [2Fe-2S]-[ferredoxin] + ATP + H(+) = [ThiI sulfur-carrier protein]-L-cysteine + a 4-thiouridine in tRNA + 2 oxidized [2Fe-2S]-[ferredoxin] + AMP + diphosphate. The catalysed reaction is [ThiS sulfur-carrier protein]-C-terminal Gly-Gly-AMP + S-sulfanyl-L-cysteinyl-[cysteine desulfurase] + AH2 = [ThiS sulfur-carrier protein]-C-terminal-Gly-aminoethanethioate + L-cysteinyl-[cysteine desulfurase] + A + AMP + 2 H(+). Its pathway is cofactor biosynthesis; thiamine diphosphate biosynthesis. Catalyzes the ATP-dependent transfer of a sulfur to tRNA to produce 4-thiouridine in position 8 of tRNAs, which functions as a near-UV photosensor. Also catalyzes the transfer of sulfur to the sulfur carrier protein ThiS, forming ThiS-thiocarboxylate. This is a step in the synthesis of thiazole, in the thiamine biosynthesis pathway. The sulfur is donated as persulfide by IscS. This Staphylococcus saprophyticus subsp. saprophyticus (strain ATCC 15305 / DSM 20229 / NCIMB 8711 / NCTC 7292 / S-41) protein is Probable tRNA sulfurtransferase.